The chain runs to 336 residues: Ethanol acetyltransferase 1 (336 aa).

The transit peptide at 1-14 (MFPTRVLRSTLQKL) directs the protein to the mitochondrion. Residues 44 to 296 (PIVFLHGIFG…VNSSHDILDQ (253 aa)) form the AB hydrolase-1 domain. Active-site charge relay system residues include Ser117, Asp141, and His291.

Belongs to the AB hydrolase superfamily.

It is found in the mitochondrion. It carries out the reaction ethanol + acetyl-CoA = ethyl acetate + CoA. It catalyses the reaction acetyl-CoA + H2O = acetate + CoA + H(+). The enzyme catalyses ethyl acetate + H2O = ethanol + acetate + H(+). Functionally, alcohol acetyltransferase that catalyzes the synthesis of ethyl acetate from ethanol and acetyl-CoA. Can also function as a thioesterase by hydrolyzing acetyl-CoA in the absence of ethanol, as well as esterase hydrolyzing ethyl acetate. In Cyberlindnera jadinii (strain ATCC 18201 / CBS 1600 / BCRC 20928 / JCM 3617 / NBRC 0987 / NRRL Y-1542) (Torula yeast), this protein is Ethanol acetyltransferase 1 (EAT1).